Here is a 608-residue protein sequence, read N- to C-terminus: Leucine aminopeptidase 2 (608 aa).

Substrate is bound by residues 134-136 (QCQ) and 269-274 (PYGGME). Histidine 298 is a Zn(2+) binding site. The Proton acceptor role is filled by glutamate 299. Zn(2+) is bound by residues histidine 302 and glutamate 321. Tyrosine 386 (proton donor) is an active-site residue.

This sequence belongs to the peptidase M1 family. Zn(2+) serves as cofactor.

The protein localises to the cytoplasm. Its subcellular location is the nucleus. It carries out the reaction an epoxide + H2O = an ethanediol. Functionally, aminopeptidase that preferentially cleaves di- and tripeptides. Also has low epoxide hydrolase activity (in vitro). Can hydrolyze the epoxide leukotriene LTA(4) but it forms preferentially 5,6-dihydroxy-7,9,11,14-eicosatetraenoic acid rather than the cytokine leukotriene B(4) as the product compared to the homologous mammalian enzyme (in vitro). This chain is Leucine aminopeptidase 2, found in Sclerotinia sclerotiorum (strain ATCC 18683 / 1980 / Ss-1) (White mold).